The following is a 254-amino-acid chain: Ribonuclease PH (254 aa).

Phosphate is bound by residues Arg-90 and 128-130 (GTR).

Belongs to the RNase PH family. As to quaternary structure, homohexameric ring arranged as a trimer of dimers.

The catalysed reaction is tRNA(n+1) + phosphate = tRNA(n) + a ribonucleoside 5'-diphosphate. Functionally, phosphorolytic 3'-5' exoribonuclease that plays an important role in tRNA 3'-end maturation. Removes nucleotide residues following the 3'-CCA terminus of tRNAs; can also add nucleotides to the ends of RNA molecules by using nucleoside diphosphates as substrates, but this may not be physiologically important. Probably plays a role in initiation of 16S rRNA degradation (leading to ribosome degradation) during starvation. This chain is Ribonuclease PH, found in Corynebacterium kroppenstedtii (strain DSM 44385 / JCM 11950 / CIP 105744 / CCUG 35717).